Reading from the N-terminus, the 341-residue chain is Putative NADPH-dependent methylglyoxal reductase GRP2 (341 aa).

Positions 40 and 171 each coordinate NADP(+).

Belongs to the NAD(P)-dependent epimerase/dehydratase family. Dihydroflavonol-4-reductase subfamily.

It localises to the cytoplasm. It catalyses the reaction (S)-lactaldehyde + NADP(+) = methylglyoxal + NADPH + H(+). Its function is as follows. Catalyzes the irreversible reduction of the cytotoxic compound methylglyoxal (MG, 2-oxopropanal) to (S)-lactaldehyde. MG is synthesized via a bypath of glycolysis from dihydroxyacetone phosphate and is believed to play a role in cell cycle regulation and stress adaptation. The chain is Putative NADPH-dependent methylglyoxal reductase GRP2 (GRP2) from Candida albicans (strain SC5314 / ATCC MYA-2876) (Yeast).